A 754-amino-acid polypeptide reads, in one-letter code: 5-methyltetrahydropteroyltriglutamate--homocysteine methyltransferase (754 aa).

5-methyltetrahydropteroyltri-L-glutamate is bound by residues 15 to 18 (RELK) and K114. Residues 430-432 (IGS) and E483 contribute to the L-homocysteine site. Residues 430 to 432 (IGS) and E483 contribute to the L-methionine site. Residues 514–515 (RC) and W560 contribute to the 5-methyltetrahydropteroyltri-L-glutamate site. D598 contacts L-homocysteine. D598 serves as a coordination point for L-methionine. E604 is a binding site for 5-methyltetrahydropteroyltri-L-glutamate. Zn(2+) contacts are provided by H641, C643, and E665. H694 serves as the catalytic Proton donor. C726 lines the Zn(2+) pocket.

Belongs to the vitamin-B12 independent methionine synthase family. The cofactor is Zn(2+).

The enzyme catalyses 5-methyltetrahydropteroyltri-L-glutamate + L-homocysteine = tetrahydropteroyltri-L-glutamate + L-methionine. Its pathway is amino-acid biosynthesis; L-methionine biosynthesis via de novo pathway; L-methionine from L-homocysteine (MetE route): step 1/1. Functionally, catalyzes the transfer of a methyl group from 5-methyltetrahydrofolate to homocysteine resulting in methionine formation. This chain is 5-methyltetrahydropteroyltriglutamate--homocysteine methyltransferase, found in Campylobacter jejuni subsp. jejuni serotype O:23/36 (strain 81-176).